A 376-amino-acid polypeptide reads, in one-letter code: N-acetyldiaminopimelate deacetylase (376 aa).

Residue D69 is part of the active site. The active-site Proton acceptor is the E128.

This sequence belongs to the peptidase M20A family. N-acetyldiaminopimelate deacetylase subfamily.

It carries out the reaction N-acetyl-(2S,6S)-2,6-diaminopimelate + H2O = (2S,6S)-2,6-diaminopimelate + acetate. It participates in amino-acid biosynthesis; L-lysine biosynthesis via DAP pathway; LL-2,6-diaminopimelate from (S)-tetrahydrodipicolinate (acetylase route): step 3/3. Catalyzes the conversion of N-acetyl-diaminopimelate to diaminopimelate and acetate. This is N-acetyldiaminopimelate deacetylase from Bacillus cereus (strain G9842).